Consider the following 206-residue polypeptide: Probable GTP-binding protein EngB (206 aa).

One can recognise an EngB-type G domain in the interval 24 to 198 (QGREVAFAGR…HARLDEWLGL (175 aa)). GTP-binding positions include 32–39 (GRSNVGKS), 59–63 (GRTQL), 77–80 (DLPG), 144–147 (TKAD), and 177–179 (FSA). Residues S39 and T61 each coordinate Mg(2+).

Belongs to the TRAFAC class TrmE-Era-EngA-EngB-Septin-like GTPase superfamily. EngB GTPase family. Requires Mg(2+) as cofactor.

Functionally, necessary for normal cell division and for the maintenance of normal septation. This is Probable GTP-binding protein EngB from Alkalilimnicola ehrlichii (strain ATCC BAA-1101 / DSM 17681 / MLHE-1).